Consider the following 157-residue polypeptide: Transcriptional repressor NrdR (157 aa).

Residues 3-34 (CSNCQNKNTKVLDSRPIEEGRAIRRRRECERC) fold into a zinc finger. The ATP-cone domain occupies 49–139 (LIVVKKDGVR…VYRQFKDITV (91 aa)).

Belongs to the NrdR family. Zn(2+) is required as a cofactor.

Functionally, negatively regulates transcription of bacterial ribonucleotide reductase nrd genes and operons by binding to NrdR-boxes. The polypeptide is Transcriptional repressor NrdR (Oceanobacillus iheyensis (strain DSM 14371 / CIP 107618 / JCM 11309 / KCTC 3954 / HTE831)).